Reading from the N-terminus, the 1648-residue chain is AT-rich interactive domain-containing protein arid-1 (1648 aa).

Disordered regions lie at residues 150–270 and 284–307; these read ISEA…PVIN and RKLE…EEKL. Composition is skewed to acidic residues over residues 166–193, 219–228, and 251–260; these read DDDE…DTEE, TQSEESSADS, and SDEEDQEDLA. The segment covering 261–270 has biased composition (polar residues); sequence TTDSENPVIN. The region spanning 655-745 is the ARID domain; the sequence is AETKDLFVAM…FLESYLAINT (91 aa). 3 disordered regions span residues 763–935, 1095–1563, and 1628–1648; these read VLPG…KEDT, SEKR…KPHD, and KTAS…TPRP. Positions 848 to 860 are enriched in acidic residues; the sequence is SDDVTDVPDDMTD. Basic and acidic residues-rich tracts occupy residues 861–878 and 925–935; these read HEDL…ERKS and SEGRGPRKEDT. Composition is skewed to acidic residues over residues 1102 to 1112 and 1145 to 1154; these read DDDESSDSDTD and GDEEAEEEVK. Residues 1165 to 1185 are compositionally biased toward low complexity; the sequence is QESPPTTSQGTTTPETAATGG. Positions 1195–1208 are enriched in pro residues; sequence YPPVPEELVPPPPV. The segment covering 1213 to 1251 has biased composition (polar residues); sequence FPSTDRFSSGGSSNYPTLSRQGSINSMASPMFSPNSDLS. Over residues 1313 to 1326 the composition is skewed to basic and acidic residues; it reads RASERSIDSASEHH. Over residues 1348-1357 the composition is skewed to polar residues; it reads ISTTQPTDTS. Low complexity predominate over residues 1377 to 1392; that stretch reads ASPTLLTSGPLTLSSS. Residues 1393–1404 show a composition bias toward pro residues; that stretch reads APPPPPASPAPP. Low complexity-rich tracts occupy residues 1474–1486 and 1531–1541; these read STTT…PKSI and TPTTMTTSTPT. The span at 1542-1551 shows a compositional bias: polar residues; it reads RADSFQTQKN.

Its subcellular location is the nucleus. Its function is as follows. DNA-binding protein which modulates activity of several transcription factors. Plays a role in the modulation of endoplasmic reticulum (ER) homeostasis during chemical and pathogen stress, including exposure to the Gram-negative bacterium P.aeruginosa. The polypeptide is AT-rich interactive domain-containing protein arid-1 (Caenorhabditis elegans).